The following is an 89-amino-acid chain: Small ribosomal subunit protein uS15 (89 aa).

Belongs to the universal ribosomal protein uS15 family. As to quaternary structure, part of the 30S ribosomal subunit. Forms a bridge to the 50S subunit in the 70S ribosome, contacting the 23S rRNA.

Functionally, one of the primary rRNA binding proteins, it binds directly to 16S rRNA where it helps nucleate assembly of the platform of the 30S subunit by binding and bridging several RNA helices of the 16S rRNA. In terms of biological role, forms an intersubunit bridge (bridge B4) with the 23S rRNA of the 50S subunit in the ribosome. This is Small ribosomal subunit protein uS15 from Ruegeria sp. (strain TM1040) (Silicibacter sp.).